The chain runs to 441 residues: Zinc finger and BTB domain-containing protein 8A (441 aa).

The BTB domain occupies 24-92 (CDCSILVEGK…VYSGKLSLTG (69 aa)). Composition is skewed to polar residues over residues 146-170 (ERSS…SPDQ) and 178-197 (KSWS…QQPL). Residues 146–252 (ERSSFYSSGW…SEEQAQMNAE (107 aa)) are disordered. 2 positions are modified to phosphoserine: S161 and S167. Glycyl lysine isopeptide (Lys-Gly) (interchain with G-Cter in SUMO2) cross-links involve residues K178, K182, and K199. The span at 198–208 (TKHEQRKDSIK) shows a compositional bias: basic and acidic residues. Residues 234-248 (SDSSSHASQSEEQAQ) are compositionally biased toward low complexity. 2 consecutive C2H2-type zinc fingers follow at residues 282–304 (FKCP…LRCH) and 310–333 (YPCQ…RTIH). K437 participates in a covalent cross-link: Glycyl lysine isopeptide (Lys-Gly) (interchain with G-Cter in SUMO2).

The protein localises to the nucleus. Functionally, may be involved in transcriptional regulation. This Bos taurus (Bovine) protein is Zinc finger and BTB domain-containing protein 8A (ZBTB8A).